Here is a 68-residue protein sequence, read N- to C-terminus: Conotoxin G1.9 (68 aa).

The signal sequence occupies residues 1–21; sequence MGMRMMFTVFLLVVLATTVVS. Positions 22 to 44 are excised as a propeptide; the sequence is FTSRRGPKSRRGEPVPTTVINYG. Disulfide bonds link C46–C52 and C47–C61.

Belongs to the conotoxin A superfamily. As to expression, expressed by the venom duct.

It is found in the secreted. Its function is as follows. Does not show activity on all the human nAChR subtypes studied. This chain is Conotoxin G1.9, found in Conus geographus (Geography cone).